Consider the following 424-residue polypeptide: Adenylosuccinate synthetase 2 (424 aa).

GTP-binding positions include Gly-11–Lys-17 and Gly-39–Thr-41. Asp-12 (proton acceptor) is an active-site residue. The Mg(2+) site is built by Asp-12 and Gly-39. Residues Asp-12–Lys-15, Asn-37–His-40, Thr-127, Arg-141, Gln-223, Thr-238, and Arg-302 each bind IMP. The active-site Proton donor is His-40. Thr-298 to Arg-304 is a substrate binding site. GTP-binding positions include Arg-304, Lys-330 to Asp-332, and Ser-412 to Gly-414.

Belongs to the adenylosuccinate synthetase family. Homodimer. It depends on Mg(2+) as a cofactor.

It localises to the cytoplasm. The enzyme catalyses IMP + L-aspartate + GTP = N(6)-(1,2-dicarboxyethyl)-AMP + GDP + phosphate + 2 H(+). The protein operates within purine metabolism; AMP biosynthesis via de novo pathway; AMP from IMP: step 1/2. In terms of biological role, plays an important role in the de novo pathway of purine nucleotide biosynthesis. Catalyzes the first committed step in the biosynthesis of AMP from IMP. The sequence is that of Adenylosuccinate synthetase 2 from Methanosarcina acetivorans (strain ATCC 35395 / DSM 2834 / JCM 12185 / C2A).